The following is a 336-amino-acid chain: Ornithine carbamoyltransferase, catabolic (336 aa).

Carbamoyl phosphate contacts are provided by residues 62 to 65, Gln-89, Arg-113, and 140 to 143; these read STRT and HPTQ. Residues Asn-172, Asp-236, and 240–241 each bind L-ornithine; that span reads SM. Carbamoyl phosphate-binding positions include 277-278 and Arg-322; that span reads CL.

Belongs to the aspartate/ornithine carbamoyltransferase superfamily. OTCase family.

It localises to the cytoplasm. The catalysed reaction is carbamoyl phosphate + L-ornithine = L-citrulline + phosphate + H(+). It participates in amino-acid degradation; L-arginine degradation via ADI pathway; carbamoyl phosphate from L-arginine: step 2/2. Functionally, reversibly catalyzes the transfer of the carbamoyl group from carbamoyl phosphate (CP) to the N(epsilon) atom of ornithine (ORN) to produce L-citrulline. In Staphylococcus aureus (strain N315), this protein is Ornithine carbamoyltransferase, catabolic (arcB).